An 864-amino-acid polypeptide reads, in one-letter code: Leucine--tRNA ligase (864 aa).

The short motif at 42–52 (PYPSGKLHMGH) is the 'HIGH' region element. The 'KMSKS' region motif lies at 624–628 (KMSKS). Lys-627 contacts ATP.

This sequence belongs to the class-I aminoacyl-tRNA synthetase family.

The protein resides in the cytoplasm. The catalysed reaction is tRNA(Leu) + L-leucine + ATP = L-leucyl-tRNA(Leu) + AMP + diphosphate. The protein is Leucine--tRNA ligase of Burkholderia ambifaria (strain MC40-6).